Reading from the N-terminus, the 137-residue chain is uncharacterized protein (137 aa).

Belongs to the ycf72 family.

It is found in the plastid. The protein resides in the chloroplast. This is an uncharacterized protein from Saccharum hybrid (Sugarcane).